The following is a 460-amino-acid chain: Cysteine--tRNA ligase (460 aa).

Position 28 (Cys28) interacts with Zn(2+). Residues 30–40 (MTVYDYCHLGH) carry the 'HIGH' region motif. Residues Cys209, His234, and Glu238 each coordinate Zn(2+). Positions 266–270 (KMSKS) match the 'KMSKS' region motif. Lys269 provides a ligand contact to ATP.

Belongs to the class-I aminoacyl-tRNA synthetase family. In terms of assembly, monomer. Zn(2+) is required as a cofactor.

Its subcellular location is the cytoplasm. It carries out the reaction tRNA(Cys) + L-cysteine + ATP = L-cysteinyl-tRNA(Cys) + AMP + diphosphate. This is Cysteine--tRNA ligase from Pseudomonas aeruginosa (strain LESB58).